The following is a 254-amino-acid chain: tRNA (guanine-N(7)-)-methyltransferase (254 aa).

The tract at residues 1–34 (MNTNTPAHPPEGAPLSEATQAALASAEHAPDSPG) is disordered. S-adenosyl-L-methionine-binding residues include glutamate 87, glutamate 112, aspartate 139, and aspartate 162. Aspartate 162 is a catalytic residue. Substrate is bound by residues lysine 166, aspartate 198, and 233-236 (TKFE).

The protein belongs to the class I-like SAM-binding methyltransferase superfamily. TrmB family.

It carries out the reaction guanosine(46) in tRNA + S-adenosyl-L-methionine = N(7)-methylguanosine(46) in tRNA + S-adenosyl-L-homocysteine. Its pathway is tRNA modification; N(7)-methylguanine-tRNA biosynthesis. Functionally, catalyzes the formation of N(7)-methylguanine at position 46 (m7G46) in tRNA. This is tRNA (guanine-N(7)-)-methyltransferase from Bordetella pertussis (strain Tohama I / ATCC BAA-589 / NCTC 13251).